A 622-amino-acid chain; its full sequence is Probable Xaa-Pro aminopeptidase P (622 aa).

Mn(2+) contacts are provided by Asp-419, Asp-430, Glu-528, and Glu-542.

Belongs to the peptidase M24B family. It depends on Mn(2+) as a cofactor.

The catalysed reaction is Release of any N-terminal amino acid, including proline, that is linked to proline, even from a dipeptide or tripeptide.. In terms of biological role, catalyzes the removal of a penultimate prolyl residue from the N-termini of peptides. This is Probable Xaa-Pro aminopeptidase P (AMPP) from Coprinopsis cinerea (strain Okayama-7 / 130 / ATCC MYA-4618 / FGSC 9003) (Inky cap fungus).